Reading from the N-terminus, the 246-residue chain is Electron transfer flavoprotein beta subunit lysine methyltransferase (246 aa).

Belongs to the methyltransferase superfamily. ETFBKMT family.

It localises to the cytoplasm. The protein localises to the mitochondrion matrix. It carries out the reaction L-lysyl-[protein] + 3 S-adenosyl-L-methionine = N(6),N(6),N(6)-trimethyl-L-lysyl-[protein] + 3 S-adenosyl-L-homocysteine + 3 H(+). Functionally, protein-lysine methyltransferase that selectively trimethylates the flavoprotein ETFB in mitochondria. Thereby, may negatively regulate the function of ETFB in electron transfer from Acyl-CoA dehydrogenases to the main respiratory chain. This is Electron transfer flavoprotein beta subunit lysine methyltransferase (etfbkmt) from Xenopus laevis (African clawed frog).